The chain runs to 282 residues: ATP phosphoribosyltransferase (282 aa).

It belongs to the ATP phosphoribosyltransferase family. Long subfamily. It depends on Mg(2+) as a cofactor.

It localises to the cytoplasm. The enzyme catalyses 1-(5-phospho-beta-D-ribosyl)-ATP + diphosphate = 5-phospho-alpha-D-ribose 1-diphosphate + ATP. It participates in amino-acid biosynthesis; L-histidine biosynthesis; L-histidine from 5-phospho-alpha-D-ribose 1-diphosphate: step 1/9. Feedback inhibited by histidine. Functionally, catalyzes the condensation of ATP and 5-phosphoribose 1-diphosphate to form N'-(5'-phosphoribosyl)-ATP (PR-ATP). Has a crucial role in the pathway because the rate of histidine biosynthesis seems to be controlled primarily by regulation of HisG enzymatic activity. In Saccharopolyspora erythraea (strain ATCC 11635 / DSM 40517 / JCM 4748 / NBRC 13426 / NCIMB 8594 / NRRL 2338), this protein is ATP phosphoribosyltransferase.